Reading from the N-terminus, the 364-residue chain is Anhydro-N-acetylmuramic acid kinase (364 aa).

12-19 (GTSHDAID) contributes to the ATP binding site.

The protein belongs to the anhydro-N-acetylmuramic acid kinase family.

It catalyses the reaction 1,6-anhydro-N-acetyl-beta-muramate + ATP + H2O = N-acetyl-D-muramate 6-phosphate + ADP + H(+). It participates in amino-sugar metabolism; 1,6-anhydro-N-acetylmuramate degradation. It functions in the pathway cell wall biogenesis; peptidoglycan recycling. Its function is as follows. Catalyzes the specific phosphorylation of 1,6-anhydro-N-acetylmuramic acid (anhMurNAc) with the simultaneous cleavage of the 1,6-anhydro ring, generating MurNAc-6-P. Is required for the utilization of anhMurNAc either imported from the medium or derived from its own cell wall murein, and thus plays a role in cell wall recycling. This Gamma-proteobacterium EBAC31A08 protein is Anhydro-N-acetylmuramic acid kinase.